We begin with the raw amino-acid sequence, 860 residues long: MQEQYRPEEIESKVQLHWDEKRTFEVTEDESKEKYYCLSMLPYPSGRLHMGHVRNYTIGDVVARYQRMLGKNVLQPIGWDAFGLPAEGAAVKNNTAPAPWTYDNIAYMKNQLKTLGFGYDWSREIATCTPEYYRWEQKFFTELYKKGLVYKKTSAVNWCPNDQTVLANEQVIDGCCWRCDTKVERKEIPQWFIKITAYADELLRDLDKLDHWPDTVKTMQRNWIGRSEGVEITFDVKGYDNTLIVYTTRPDTFMGATYLAVAAGHPLAQKAAANNAELAAFVDECRNTKVAEAEMATMEKKGVDTGYKAIHPLTGEEIPVWAANFVLMEYGTGAVMAVPGHDQRDYEFASKYGLTIKPVILAADGSEPDLSEQALTEKGVLFNSGEFDGLAFEAAFNAIADKLAEKGVGERKVNYRLRDWGVSRQRYWGAPIPMITQEDGTVLPTPEDQLPVILPEDVVMDGITSPIKADPEWAKTTVNGMPALRETDTFDTFMESSWYYARYTCPQYQEGMLDSKAANYWLPVDIYIGGIEHAIMHLLYFRFFHKLMRDAGMVTSDEPAKQLLCQGMVLADAFYYVGENGERNWVSPVDAIVERDEKGRIVKAKDAAGHELVYTGMSKMSKSKNNGIDPQVMVERYGADTVRLFMMFASPADMTLEWQESGVEGANRFIKRVWKLVYEHTAKGPVAALNVDALSEDQKALRRDVHKTIAKVTDDIGRRQTFNTAIAAIMELMNKLAKAPQEGEQDRALLQEALQAVVRMLNPFTPHVCFTLWQELGGEGDIDNAPWPVADEQAMVENTTLVVVQVNGKVRGKITVAVDATEEQVRERAGQEHLVAKYLDGVTVRKVIYVPGKLLNLVVG.

The short motif at 42 to 52 (PYPSGRLHMGH) is the 'HIGH' region element. A 'KMSKS' region motif is present at residues 619–623 (KMSKS). Position 622 (lysine 622) interacts with ATP.

This sequence belongs to the class-I aminoacyl-tRNA synthetase family.

Its subcellular location is the cytoplasm. The enzyme catalyses tRNA(Leu) + L-leucine + ATP = L-leucyl-tRNA(Leu) + AMP + diphosphate. The chain is Leucine--tRNA ligase from Salmonella paratyphi A (strain ATCC 9150 / SARB42).